Here is a 290-residue protein sequence, read N- to C-terminus: Pyridoxal kinase PdxY (290 aa).

Substrate-binding positions include serine 9 and 44 to 45 (TQ). Positions 112, 144, 149, and 182 each coordinate ATP. Aspartate 221 serves as a coordination point for substrate.

Belongs to the pyridoxine kinase family. PdxY subfamily. In terms of assembly, homodimer. It depends on Mg(2+) as a cofactor.

The catalysed reaction is pyridoxal + ATP = pyridoxal 5'-phosphate + ADP + H(+). It participates in cofactor metabolism; pyridoxal 5'-phosphate salvage; pyridoxal 5'-phosphate from pyridoxal: step 1/1. In terms of biological role, pyridoxal kinase involved in the salvage pathway of pyridoxal 5'-phosphate (PLP). Catalyzes the phosphorylation of pyridoxal to PLP. The protein is Pyridoxal kinase PdxY of Vibrio vulnificus (strain CMCP6).